The primary structure comprises 204 residues: UPF0228 protein MA_0511 (204 aa).

It belongs to the UPF0228 family.

This chain is UPF0228 protein MA_0511, found in Methanosarcina acetivorans (strain ATCC 35395 / DSM 2834 / JCM 12185 / C2A).